Here is a 91-residue protein sequence, read N- to C-terminus: Ragulator complex protein LAMTOR5 homolog (91 aa).

It belongs to the LAMTOR5 family. As to quaternary structure, part of the Ragulator complex.

It is found in the cytoplasm. The protein resides in the lysosome. Functionally, regulator of the TOR pathway, a signaling cascade that promotes cell growth in response to growth factors, energy levels, and amino acids. As part of the Ragulator complex, may activate the TOR signaling cascade in response to amino acids. The sequence is that of Ragulator complex protein LAMTOR5 homolog from Nematostella vectensis (Starlet sea anemone).